The sequence spans 157 residues: RxLR effector protein PITG_04049 (157 aa).

Positions 1–23 (MRLIAGVLAGFLVICEVTSTSES) are cleaved as a signal peptide. A RxLR-dEER motif is present at residues 51-65 (QFLRTDVVMNRGEER).

Belongs to the RxLR effector family.

It is found in the secreted. It localises to the host cytoplasm. The protein resides in the host nucleus. In terms of biological role, effector that might be involved in host plant infection. The chain is RxLR effector protein PITG_04049 from Phytophthora infestans (strain T30-4) (Potato late blight agent).